The sequence spans 76 residues: UPF0235 protein MMAR_2910 (76 aa).

Belongs to the UPF0235 family.

The polypeptide is UPF0235 protein MMAR_2910 (Mycobacterium marinum (strain ATCC BAA-535 / M)).